The primary structure comprises 239 residues: uncharacterized protein (239 aa).

This is an uncharacterized protein from Methanocaldococcus jannaschii (strain ATCC 43067 / DSM 2661 / JAL-1 / JCM 10045 / NBRC 100440) (Methanococcus jannaschii).